The sequence spans 199 residues: DnaJ homolog subfamily C member 5B (199 aa).

Residues serine 14 and serine 16 each carry the phosphoserine modification. A J domain is found at 19–84 (SLYEILGLHK…SKRNIYDKYG (66 aa)).

Interacts with the chaperone complex consisting of HSC70 and SGTA. In terms of processing, palmitoylated.

The protein resides in the membrane. This Mus musculus (Mouse) protein is DnaJ homolog subfamily C member 5B (Dnajc5b).